Reading from the N-terminus, the 498-residue chain is MEESSMAQASLICLLLSFSIIMLSNAADISIDCGSSSSHIDADNRTWVGDTDFVATGLTSKFVPFSKFPAELTTLRYFPTGETNCYTNIPVEKGGKVLVRTRFLYGDYDEESTYPTFDVVYDGKHRYSVVTTTFETVTESEAIFIPENGNISVCFFRTLSSKTPFVSTIEVRRLDDSMYTDLGPKEGFILQQRIAYGAQELVRFPYDPYDRIWMPASVFASHLTSSATSIDTTGADNRPPEIILRTSWSQKDMAFYDIKLPFSGVTFYIVIYFSEPLSLGSDQKRSFNVYYEDKQVGSDLIVPPFGAVTQASLRDVVKTELAYLTFEATPDSTLDPLINALELYVISNSGGSGNGTNSTSTSGGGSPSPGGGSGSPPSTGGGSGSPPSTGGGGGSPSKGGGGGKSGGSNNGDGGTNKASEDEKSADSSGKSGEEKSSSNLALPLGISLPTLLSLGAGGWGVWKYFIKPRRHPESELPLKQNISLQVNMGNATVVNAGQ.

An N-terminal signal peptide occupies residues M1–A26. Residues A27–A441 are Extracellular-facing. N-linked (GlcNAc...) asparagine glycans are attached at residues N44, N150, N354, and N357. Residues G351–N439 form a disordered region. A compositionally biased stretch (gly residues) spans S362–G414. The span at A418–S436 shows a compositional bias: basic and acidic residues. A helical membrane pass occupies residues L442–W462. Topologically, residues K463–Q498 are cytoplasmic.

The protein localises to the membrane. This is an uncharacterized protein from Arabidopsis thaliana (Mouse-ear cress).